The sequence spans 165 residues: Transcription antitermination protein NusB (165 aa).

Positions 1–20 (MSDVENGGEPRQPSVKPANQ) are disordered.

The protein belongs to the NusB family.

Involved in transcription antitermination. Required for transcription of ribosomal RNA (rRNA) genes. Binds specifically to the boxA antiterminator sequence of the ribosomal RNA (rrn) operons. The polypeptide is Transcription antitermination protein NusB (Agrobacterium fabrum (strain C58 / ATCC 33970) (Agrobacterium tumefaciens (strain C58))).